Reading from the N-terminus, the 375-residue chain is ORC1-type DNA replication protein 3 (375 aa).

ATP contacts are provided by residues 66-70, tyrosine 209, and arginine 221; that span reads TGKTT.

Belongs to the CDC6/cdc18 family.

In terms of biological role, involved in regulation of DNA replication. The protein is ORC1-type DNA replication protein 3 (cdc6c) of Haloarcula marismortui (strain ATCC 43049 / DSM 3752 / JCM 8966 / VKM B-1809) (Halobacterium marismortui).